The chain runs to 320 residues: ATP-dependent 6-phosphofructokinase (320 aa).

Glycine 11 serves as a coordination point for ATP. Position 21 to 25 (arginine 21 to lysine 25) interacts with ADP. ATP is bound by residues arginine 72 to phenylalanine 73 and glycine 102 to serine 105. Residue aspartate 103 participates in Mg(2+) binding. Residue threonine 125 to aspartate 127 coordinates substrate. Aspartate 127 acts as the Proton acceptor in catalysis. Arginine 154 serves as a coordination point for ADP. Residues arginine 162 and methionine 169–arginine 171 each bind substrate. ADP contacts are provided by residues glycine 185–aspartate 187 and lysine 213–histidine 215. Substrate is bound by residues glutamate 222, arginine 243, and histidine 249–arginine 252.

The protein belongs to the phosphofructokinase type A (PFKA) family. ATP-dependent PFK group I subfamily. Prokaryotic clade 'B1' sub-subfamily. Homotetramer. Mg(2+) serves as cofactor.

Its subcellular location is the cytoplasm. It carries out the reaction beta-D-fructose 6-phosphate + ATP = beta-D-fructose 1,6-bisphosphate + ADP + H(+). The protein operates within carbohydrate degradation; glycolysis; D-glyceraldehyde 3-phosphate and glycerone phosphate from D-glucose: step 3/4. With respect to regulation, allosterically activated by ADP and other diphosphonucleosides, and allosterically inhibited by phosphoenolpyruvate. Functionally, catalyzes the phosphorylation of D-fructose 6-phosphate to fructose 1,6-bisphosphate by ATP, the first committing step of glycolysis. The protein is ATP-dependent 6-phosphofructokinase of Lactobacillus acidophilus (strain ATCC 700396 / NCK56 / N2 / NCFM).